The primary structure comprises 518 residues: Beta-secretase 2 (518 aa).

The N-terminal stretch at 1 to 20 (MGALARALLLPLLAQWLLRA) is a signal peptide. Residues 21–62 (APELAPAPFTLPLRVAAATNRVVAPTPGPGTPAERHADGLAL) constitute a propeptide that is removed on maturation. Residues 21–473 (APELAPAPFT…SEPILWIVSY (453 aa)) are Extracellular-facing. The Peptidase A1 domain maps to 92–429 (YYLEMLIGTP…DRAQKRVGFA (338 aa)). Asp-110 is a catalytic residue. A glycan (N-linked (GlcNAc...) asparagine) is linked at Asn-170. 3 cysteine pairs are disulfide-bonded: Cys-233-Cys-433, Cys-292-Cys-457, and Cys-344-Cys-393. Asp-303 is an active-site residue. N-linked (GlcNAc...) asparagine glycosylation occurs at Asn-366. The chain crosses the membrane as a helical span at residues 474 to 494 (ALMSVCGAILLVLIVLLLLPF). At 495-518 (RCQRRPRDPEVVNDESSLVRHRWK) the chain is on the cytoplasmic side.

This sequence belongs to the peptidase A1 family. Monomer. Interacts with RTN3 and RTN4. Post-translationally, undergoes autoproteolytic cleavage. In terms of processing, glycosylated. As to expression, brain. Present in neurons within the hippocampus, frontal cortex and temporal cortex (at protein level). Expressed at low levels in most peripheral tissues and at higher levels in colon, kidney, pancreas, placenta, prostate, stomach and trachea. Expressed at low levels in the brain. Found in spinal cord, medulla oblongata, substantia nigra and locus coruleus. Expressed in the ductal epithelium of both normal and malignant prostate.

Its subcellular location is the cell membrane. It is found in the golgi apparatus. The protein resides in the endoplasmic reticulum. The protein localises to the endosome. It localises to the melanosome. The enzyme catalyses Broad endopeptidase specificity. Cleaves Glu-Val-Asn-Leu-|-Asp-Ala-Glu-Phe in the Swedish variant of Alzheimer's amyloid precursor protein.. Its function is as follows. Responsible for the proteolytic processing of the amyloid precursor protein (APP). Cleaves APP, between residues 690 and 691, leading to the generation and extracellular release of beta-cleaved soluble APP, and a corresponding cell-associated C-terminal fragment which is later released by gamma-secretase. It has also been shown that it can cleave APP between residues 671 and 672. Involved in the proteolytic shedding of PMEL at early stages of melanosome biogenesis. Cleaves PMEL within the M-beta fragment to release the amyloidogenic PMEL luminal fragment containing M-alpha and a small portion of M-beta N-terminus. This is a prerequisite step for subsequent processing and assembly of PMEL fibrils into amyloid sheets. Responsible also for the proteolytic processing of CLTRN in pancreatic beta cells. The protein is Beta-secretase 2 (BACE2) of Homo sapiens (Human).